Consider the following 2342-residue polypeptide: Outer kinetochore KNL1 complex subunit KNL1 (2342 aa).

Residues 1–56 (MDGVSSEANEENDNIERPVRRRHSSILKPPRSPLQDLRGGNERVQESNALRNKKNS) form a disordered region. The may mediate oligomerization stretch occupies residues 1–250 (MDGVSSEANE…FNDFIKRLKT (250 aa)). Positions 1–728 (MDGVSSEANE…QSLFSTTKPL (728 aa)) are interaction with BUB1 and BUB1B. 2 interaction with microtubules regions span residues 17–34 (RPVR…RSPL) and 53–80 (KKNS…VRKS). An interaction with PP1CA; contains the protein phosphatase 1 (PP1) interaction motifs SILK, RVXF and phi-phi region spans residues 23–80 (HSSILKPPRSPLQDLRGGNERVQESNALRNKKNSRRVSFADTIKVFQTESHMKIVRKS). Serine 24 carries the phosphoserine; by AURKB modification. Serine 32 is subject to Phosphoserine. The residue at position 60 (serine 60) is a Phosphoserine; by AURKB. Residues 174–190 (ENQMDLTSSHTVMITKG) are interaction with BUB1. Residues 210–226 (ANLKLHTEDSRMKKEVN) form an interaction with BUB1B region. Residue threonine 539 is modified to Phosphothreonine. Phosphoserine occurs at positions 578 and 584. Threonine 586 carries the post-translational modification Phosphothreonine. Residues 620 to 646 (APESTSESHSQSKSSSDECEEITKSRN) are disordered. The segment covering 622-633 (ESTSESHSQSKS) has biased composition (low complexity). The residue at position 767 (serine 767) is a Phosphoserine. Positions 855 to 1201 (EDESVQKPKF…VTDSHTVFID (347 aa)) are 2 X 104 AA approximate repeats. Residues 885–989 (DKTIVFSEDD…MTESHTVFID (105 aa)) form repeat 1. Threonine 901 is subject to Phosphothreonine. Residues serine 956, serine 1039, serine 1076, and serine 1088 each carry the phosphoserine modification. The stretch at 1099–1201 (DKTIVFSENH…VTDSHTVFID (103 aa)) is repeat 2. Serine 1448 bears the Phosphoserine mark. The segment at 1639-1662 (SNAKDSRDEENKKSHNGAETTSLP) is disordered. A compositionally biased stretch (basic and acidic residues) spans 1642–1651 (KDSRDEENKK). Residues serine 1675 and serine 1773 each carry the phosphoserine modification. The Nuclear localization signal motif lies at 1789-1803 (TWVQEEEDIHKEKKI). Serine 1831 bears the Phosphoserine mark. 2 positions are modified to phosphoserine; by TTK: serine 1831 and serine 1834. Phosphoserine is present on residues serine 1845 and serine 1860. Positions 1981–2108 (KMRHCSDKEL…LLELEVQKEQ (128 aa)) are required for interaction with ZWINT. A coiled-coil region spans residues 2024–2133 (VQSAQNEREK…EELLDQLSLS (110 aa)). The tract at residues 2091 to 2311 (EEEELQRNLL…GNTSQDDIAT (221 aa)) is interaction with NSL1, DSN1 and required for assembly into the outer kinetochore.

Component of the KNL1 complex composed of KNL1 and ZWINT. Part of the ten-subunit outer kinetochore KMN network that includes the KNL1, MIS12 and NDC80 complexes; a bioriented kinetochore contains approximately 150 copies of the network. Interacts (via C-terminus) with the MIS12 complex subunits NSL1 (via C-terminus), PMF1 and DSN1; the interaction is direct. Interacts (via N-terminal region) with BUB1B (via BUB1 N-terminal domain); the interaction is direct and is required for cell cycle arrest upon activation of the mitotic spindle assembly checkpoint. Interacts (via N-terminal region) with BUB1 (via BUB1 N-terminal domain); the interaction is direct. Interacts with the protein phosphatase PP1 subunit PPP1CA; the interaction is direct and mutually exclusive with binding to microtubules. Interacts with the protein phosphatase PP1 subunit PPP1CC; the interaction is direct and mutually exclusive with binding to microtubules. In terms of processing, phosphorylation by AURKB negatively regulates its interaction with protein phosphatase 1 (PP1) subunit PPP1CA and with microtubules. In terms of tissue distribution, highly expressed in testis, where it is localized in germ cells, in particular in spermatocytes and in the pre-acrosome of round spermatids. Detected in the acrosome of ejaculated spermatozoa. Detected in adult thymus, bone marrow, colon, small intestine, appendix and placenta, and in fetal liver and thymus.

It is found in the nucleus. Its subcellular location is the chromosome. The protein localises to the centromere. The protein resides in the kinetochore. It localises to the cytoplasm. In terms of biological role, acts as a component of the outer kinetochore KNL1 complex that serves as a docking point for spindle assembly checkpoint components and mediates microtubule-kinetochore interactions. Kinetochores, consisting of a centromere-associated inner segment and a microtubule-contacting outer segment, play a crucial role in chromosome segregation by mediating the physical connection between centromeric DNA and spindle microtubules. The outer kinetochore is made up of the ten-subunit KMN network, comprising the MIS12, NDC80 and KNL1 complexes, and auxiliary microtubule-associated components; together they connect the outer kinetochore with the inner kinetochore, bind microtubules, and mediate interactions with mitotic checkpoint proteins that delay anaphase until chromosomes are bioriented on the spindle. Required for kinetochore binding by a distinct subset of kMAPs (kinetochore-bound microtubule-associated proteins) and motors. Acts in coordination with CENPK to recruit the NDC80 complex to the outer kinetochore. Can bind either to microtubules or to the protein phosphatase 1 (PP1) catalytic subunits PPP1CA and PPP1CC (via overlapping binding sites), it has higher affinity for PP1. Recruits MAD2L1 to the kinetochore and also directly links BUB1 and BUB1B to the kinetochore. In addition to orienting mitotic chromosomes, it is also essential for alignment of homologous chromosomes during meiotic metaphase I. In meiosis I, required to activate the spindle assembly checkpoint at unattached kinetochores to correct erroneous kinetochore-microtubule attachments. The polypeptide is Outer kinetochore KNL1 complex subunit KNL1 (Homo sapiens (Human)).